A 661-amino-acid polypeptide reads, in one-letter code: Zinc finger protein 81 (661 aa).

The KRAB domain maps to 21 to 92; the sequence is VSFEDVTVDF…EGEAPHQSCS (72 aa). Lys-266 is covalently cross-linked (Glycyl lysine isopeptide (Lys-Gly) (interchain with G-Cter in SUMO2)). 12 consecutive C2H2-type zinc fingers follow at residues 330–352, 358–380, 386–408, 414–436, 442–464, 470–492, 498–520, 526–548, 554–576, 582–604, 610–632, and 638–660; these read YICT…EKTH, YKCN…QTTH, FECS…QKIH, HKCS…QRIH, YICT…QRIH, YECS…KRIH, YICT…QKSH, YICA…QTIH, YVCA…QRIH, YKCP…QRIH, and YKCS…RNIH.

The protein belongs to the krueppel C2H2-type zinc-finger protein family.

The protein localises to the nucleus. Its function is as follows. May be involved in transcriptional regulation. The protein is Zinc finger protein 81 (ZNF81) of Homo sapiens (Human).